The following is a 476-amino-acid chain: ATP synthase subunit beta (476 aa).

Position 154-161 (154-161) interacts with ATP; sequence GGAGVGKT.

It belongs to the ATPase alpha/beta chains family. In terms of assembly, F-type ATPases have 2 components, CF(1) - the catalytic core - and CF(0) - the membrane proton channel. CF(1) has five subunits: alpha(3), beta(3), gamma(1), delta(1), epsilon(1). CF(0) has four main subunits: a(1), b(1), b'(1) and c(9-12).

It localises to the cell inner membrane. It carries out the reaction ATP + H2O + 4 H(+)(in) = ADP + phosphate + 5 H(+)(out). Its function is as follows. Produces ATP from ADP in the presence of a proton gradient across the membrane. The catalytic sites are hosted primarily by the beta subunits. In Rhodopseudomonas palustris (strain ATCC BAA-98 / CGA009), this protein is ATP synthase subunit beta.